Reading from the N-terminus, the 274-residue chain is DNA repair protein Rad1 (274 aa).

It belongs to the rad1 family. In terms of assembly, component of the 9-1-1 checkpoint clamp complex consisting of Rad9 isoform A, Rad1 and Hus1-like; the interaction with Hus1-like is direct. Does not interact directly with Rad9; this interaction is probably mediated by Hus1-like. This complex probably also forms with Rad9 isoform B, however 9-1-1 complex containing Rad9 isoform A localizes to the nuclear periphery. Expressed in ovary.

The protein resides in the cytoplasm. It localises to the nucleus. Its subcellular location is the nucleus envelope. In Drosophila melanogaster (Fruit fly), this protein is DNA repair protein Rad1.